A 179-amino-acid chain; its full sequence is Ribosome maturation factor RimM (179 aa).

The PRC barrel domain maps to 98–170 (PDEFWDRRLR…RIVVSGIPGL (73 aa)).

This sequence belongs to the RimM family. In terms of assembly, binds ribosomal protein uS19.

It localises to the cytoplasm. Functionally, an accessory protein needed during the final step in the assembly of 30S ribosomal subunit, possibly for assembly of the head region. Essential for efficient processing of 16S rRNA. May be needed both before and after RbfA during the maturation of 16S rRNA. It has affinity for free ribosomal 30S subunits but not for 70S ribosomes. The protein is Ribosome maturation factor RimM of Cutibacterium acnes (strain DSM 16379 / KPA171202) (Propionibacterium acnes).